A 468-amino-acid chain; its full sequence is Immunoglobulin superfamily member 21 (468 aa).

The signal sequence occupies residues 1–24; the sequence is MRAAPSLRRASCLLLAAILDLARG. Ig-like domains are found at residues 25–132 and 344–429; these read YLTV…VVLA and PKIM…TRLI. A disulfide bridge links Cys-46 with Cys-116.

In terms of assembly, interacts (Ig-like 1 domain) with NRXN2 (via Laminin G-like 1 domain) in a trans-interaction manner. In terms of tissue distribution, expressed in brain.

The protein localises to the postsynaptic cell membrane. In terms of biological role, involved in synaptic inhibition in the brain. Selectively regulates inhibitory presynaptic differentiation through interacting with presynaptic NRXN2. This chain is Immunoglobulin superfamily member 21, found in Rattus norvegicus (Rat).